The chain runs to 116 residues: Photosystem II assembly factor Psb28 protein (116 aa).

Belongs to the Psb28 family. As to quaternary structure, part of a photosystem II (PSII) assembly intermediate complex PSII-I; crystallized from a strain deleted of psbJ, it forms monomeric PSII before addition of the oxygen evolving complex. PSII-I includes 3 assembly factors not found in mature PSII (Psb27, Psb28 and Psb34). This protein binds to the cytoplasmic face of D1 and D2 (psbA and psbD), contacting CP47 (psbB) directly above the quinone b-binding site.

It is found in the cellular thylakoid membrane. A photosystem II (PSII) assembly factor that binds PSII during biogenesis, protecting the complex until water splitting is activated. This is Photosystem II assembly factor Psb28 protein from Thermosynechococcus vestitus (strain NIES-2133 / IAM M-273 / BP-1).